A 1271-amino-acid chain; its full sequence is Breakpoint cluster region protein (1271 aa).

M1 is modified (N-acetylmethionine). The interval 1–426 is kinase; sequence MVDPVGFAEA…DGEGAFHGDA (426 aa). Residues 28-55 adopt a coiled-coil conformation; sequence VGDIEQELERCKASIRRLEQEVNQERFR. Residues 67-173 are disordered; sequence KKSYDRQRWG…GHGQPGADAE (107 aa). Residues 87–105 are compositionally biased toward low complexity; that stretch reads ASEPRASASRPQPAPADGA. A Phosphoserine modification is found at S122. A compositionally biased stretch (low complexity) spans 123–138; it reads PGKARPGTARRPGAAA. S139 is modified (phosphoserine). Y177 carries the phosphotyrosine; by HCK modification. Residues 185-198 show a composition bias toward basic and acidic residues; that stretch reads ERGLVKVNDKEVSD. 3 disordered regions span residues 185-247, 286-392, and 416-476; these read ERGL…GDYE, GMME…HKRH, and NDGE…SRDA. The tract at residues 197–385 is binding to ABL SH2-domain; it reads SDRISSLGSQ…QSFDSSSPPT (189 aa). A compositionally biased stretch (polar residues) spans 199–208; the sequence is RISSLGSQAM. S202, S215, S222, and S236 each carry phosphoserine. At Y246 the chain carries Phosphotyrosine; by FES. Low complexity-rich tracts occupy residues 346–356 and 369–382; these read SSGQSSRVSPS and SPSQ…DSSS. 3 positions are modified to phosphoserine: S356, S377, and S382. Residue T385 is modified to Phosphothreonine. Basic and acidic residues predominate over residues 441–451; that stretch reads DRAEEQRRHQD. Residues S459 and S463 each carry the phosphoserine modification. An Omega-N-methylarginine modification is found at R471. S473 and S488 each carry phosphoserine. Residues 498 to 691 form the DH domain; the sequence is MRKWVLSGIL…QNFLSSINEE (194 aa). The residue at position 554 (Y554) is a Phosphotyrosine. At T641 the chain carries Phosphothreonine. Y644 is modified (phosphotyrosine). Phosphothreonine is present on T693. In terms of domain architecture, PH spans 708-866; sequence QLLKDSFMVE…WRENIREQQK (159 aa). The C2 domain maps to 893–1020; sequence HSIPLTINKE…QDRDWQRTVI (128 aa). Residue S894 is modified to Phosphoserine. The Rho-GAP domain maps to 1054–1248; the sequence is VKIAVVTKRE…VMSQVQVLLY (195 aa). At S1264 the chain carries Phosphoserine.

In terms of assembly, homotetramer. Interacts with PDZK1. May interact with CCPG1. Interacts with FES/FPS, ABL1, PIK3R1 and GRB2. Interacts with HCK. Interacts with SH2D5. Interacts with DLG4. Autophosphorylated. Phosphorylated by FES/FPS on tyrosine residues, leading to down-regulation of the BCR kinase activity. Phosphorylation at Tyr-177 by HCK is important for interaction with GRB2.

It localises to the postsynaptic density. It is found in the cell projection. Its subcellular location is the dendritic spine. The protein resides in the axon. The protein localises to the synapse. It catalyses the reaction L-seryl-[protein] + ATP = O-phospho-L-seryl-[protein] + ADP + H(+). The enzyme catalyses L-threonyl-[protein] + ATP = O-phospho-L-threonyl-[protein] + ADP + H(+). Protein with a unique structure having two opposing regulatory activities toward small GTP-binding proteins. The C-terminus is a GTPase-activating protein (GAP) domain which stimulates GTP hydrolysis by RAC1, RAC2 and CDC42. Accelerates the intrinsic rate of GTP hydrolysis of RAC1 or CDC42, leading to down-regulation of the active GTP-bound form. The central Dbl homology (DH) domain functions as guanine nucleotide exchange factor (GEF) that modulates the GTPases CDC42, RHOA and RAC1. Promotes the conversion of CDC42, RHOA and RAC1 from the GDP-bound to the GTP-bound form. The amino terminus contains an intrinsic kinase activity. Functions as an important negative regulator of neuronal RAC1 activity. Regulates macrophage functions such as CSF1-directed motility and phagocytosis through the modulation of RAC1 activity. Plays a major role as a RHOA GEF in keratinocytes being involved in focal adhesion formation and keratinocyte differentiation. In Homo sapiens (Human), this protein is Breakpoint cluster region protein.